The chain runs to 757 residues: MLQIQVEEKEEDTEESSSEEEEDKLPRRESLRPKRKRTRDVINEDDPEPEPEDEETRKAREKERRRRLRRGAEEEEEIDEEELERLKALLDENRQMIATVKCKPWKMEKKIEVLKEAKKFVSENEGALGKGKGKKWFAFKMMMAKKWAKFLRDFENFKAACVPWENKIKAIESQFGSSVASYFLFLRWMYGVNMVLFVLTFSLIMLPEYLWGLPYGSLPRKTVPRAEEASAANFGVLYDFNGLAQYSVLFYGYYDNKRTIGWLNFRLPLSYFLVGIMCIGYSFLVVLKAMTKNIGDDGGGDDNTFNFSWKVFCSWDYLIGNPETADNKFNSITMNFKEAIIEERAAQVEENIHLIRFLRFLANFFVFLTLGASGYLIFWAVKRSQEFAQQDPDTLGWWEKNEMNMVMSLLGMFCPTLFDLFAELEDYHPLIALKWLLGRIFALLLGNLYVFILALMDEINNKIEEEKLVKANITLWEANMIKAYNESLSGLSGNTTGAPFFVHPADVPRGPCWETMVGQEFVRLTVSDVLTTYVTILIGDFLRACFVRFCNYCWCWDLEYGYPSYTEFDISGNVLALIFNQGMIWMGSFFAPSLPGINILRLHTSMYFQCWAVMCCNVPEARVFKASRSNNFYLGMLLLILFLSTMPVLYMIVSLPPSFDCGPFSGKNRMFEVIGETLEHDFPSWMAKILRQLSNPGLVIAVILVMVLTIYYLNATAKGQKAANLDLKKKMKQQALENKMRNKKMAAARAAAAAGGQ.

A disordered region spans residues 1–74 (MLQIQVEEKE…RRRLRRGAEE (74 aa)). At 1 to 176 (MLQIQVEEKE…KIKAIESQFG (176 aa)) the chain is on the cytoplasmic side. Residues 8–23 (EKEEDTEESSSEEEED) show a composition bias toward acidic residues. Ser30 bears the Phosphoserine mark. Thr38 is subject to Phosphothreonine. A compositionally biased stretch (acidic residues) spans 43 to 54 (NEDDPEPEPEDE). Positions 81–130 (EELERLKALLDENRQMIATVKCKPWKMEKKIEVLKEAKKFVSENEGALGK) are required for interaction with CIB2. At Ser122 the chain carries Phosphoserine. A helical transmembrane segment spans residues 177 to 214 (SSVASYFLFLRWMYGVNMVLFVLTFSLIMLPEYLWGLP). Over 215 to 265 (YGSLPRKTVPRAEEASAANFGVLYDFNGLAQYSVLFYGYYDNKRTIGWLNF) the chain is Extracellular. Residues 266–297 (RLPLSYFLVGIMCIGYSFLVVLKAMTKNIGDD) form a helical membrane-spanning segment. The required for interaction with CIB2 stretch occupies residues 298–352 (GGGDDNTFNFSWKVFCSWDYLIGNPETADNKFNSITMNFKEAIIEERAAQVEENI). Residues 298 to 353 (GGGDDNTFNFSWKVFCSWDYLIGNPETADNKFNSITMNFKEAIIEERAAQVEENIH) lie on the Cytoplasmic side of the membrane. Position 308 is a phosphoserine (Ser308). The helical transmembrane segment at 354 to 384 (LIRFLRFLANFFVFLTLGASGYLIFWAVKRS) threads the bilayer. At 385–396 (QEFAQQDPDTLG) the chain is on the extracellular side. Phosphothreonine is present on Thr394. The chain crosses the membrane as a helical span at residues 397 to 424 (WWEKNEMNMVMSLLGMFCPTLFDLFAEL). Residues 425–428 (EDYH) are Cytoplasmic-facing. Residues 429–463 (PLIALKWLLGRIFALLLGNLYVFILALMDEINNKI) form a helical membrane-spanning segment. The Extracellular segment spans residues 464-512 (EEEKLVKANITLWEANMIKAYNESLSGLSGNTTGAPFFVHPADVPRGPC). Residues 513–550 (WETMVGQEFVRLTVSDVLTTYVTILIGDFLRACFVRFC) form a helical membrane-spanning segment. At 551-569 (NYCWCWDLEYGYPSYTEFD) the chain is on the cytoplasmic side. A helical transmembrane segment spans residues 570 to 590 (ISGNVLALIFNQGMIWMGSFF). Residues 591–593 (APS) lie on the Extracellular side of the membrane. Residues 594-616 (LPGINILRLHTSMYFQCWAVMCC) traverse the membrane as a helical segment. The Cytoplasmic portion of the chain corresponds to 617–630 (NVPEARVFKASRSN). The helical transmembrane segment at 631 to 654 (NFYLGMLLLILFLSTMPVLYMIVS) threads the bilayer. The Extracellular segment spans residues 655–697 (LPPSFDCGPFSGKNRMFEVIGETLEHDFPSWMAKILRQLSNPG). Residues 698 to 731 (LVIAVILVMVLTIYYLNATAKGQKAANLDLKKKM) traverse the membrane as a helical segment. Topologically, residues 732–757 (KQQALENKMRNKKMAAARAAAAAGGQ) are cytoplasmic.

It belongs to the TMC family. Forms the MET channel composed of TMC dimer (TMC1 or TMC2), TMIE, TOMT, CIB (CIB2 or CIB3), LHFPL5 and PCDH15. Interacts with PIEZO1 and PIEZO2; the interaction may be part of the MET complex. The interaction of TMC1 and TMC2 with TOMT is required for the transportation of TMC1/2 into the stereocilia of hair cells. Interacts (via N-terminus) with both isoforms CD1 and CD3 of PCDH15. Can form a heterodimer with TMC2, TMC5 or TMC7. Detected in cochlear inner and outer hair cells and in neurosensory epithelia of the vestibular end organs. Also expressed in cortex, cerebellum, eye, colon, ovary and testis.

It is found in the cell membrane. It carries out the reaction Ca(2+)(in) = Ca(2+)(out). Its function is as follows. Pore-forming subunit of the mechanotransducer (MET) non-selective cation channel complex located at the tips of stereocilia of cochlear hair cells and that mediates sensory transduction in the auditory system. The MET complex is composed of two dimeric pore-forming ion-conducting transmembrane TMC (TMC1 or TMC2) subunits, several auxiliary proteins including LHFPL5, TMIE, CIB2/3 and TOMT, the tip-link PCDH15, and possibly the PIEZO subunits. MET channel is activated by tension in the tip-link extending from the side wall of one stereocilium to the tip of the adjacent shorter stereocilium, where the channel is located. TMC1 MET channel is highly permeable to calcium and likely transports monovalent cations. Also involved in vestibular hair cells transduction current. This Mus musculus (Mouse) protein is Transmembrane channel-like protein 1.